The primary structure comprises 349 residues: Tetraacyldisaccharide 4'-kinase (349 aa).

58–65 (TAGGSGKT) provides a ligand contact to ATP.

Belongs to the LpxK family.

The enzyme catalyses a lipid A disaccharide + ATP = a lipid IVA + ADP + H(+). It functions in the pathway glycolipid biosynthesis; lipid IV(A) biosynthesis; lipid IV(A) from (3R)-3-hydroxytetradecanoyl-[acyl-carrier-protein] and UDP-N-acetyl-alpha-D-glucosamine: step 6/6. Its function is as follows. Transfers the gamma-phosphate of ATP to the 4'-position of a tetraacyldisaccharide 1-phosphate intermediate (termed DS-1-P) to form tetraacyldisaccharide 1,4'-bis-phosphate (lipid IVA). This is Tetraacyldisaccharide 4'-kinase from Shewanella amazonensis (strain ATCC BAA-1098 / SB2B).